We begin with the raw amino-acid sequence, 230 residues long: UPF0502 protein Oter_3715 (230 aa).

The protein belongs to the UPF0502 family.

This Opitutus terrae (strain DSM 11246 / JCM 15787 / PB90-1) protein is UPF0502 protein Oter_3715.